The following is a 296-amino-acid chain: Ribosomal RNA small subunit methyltransferase H (296 aa).

Residues 38–40, E57, F88, D103, and H110 each bind S-adenosyl-L-methionine; that span reads GAH.

It belongs to the methyltransferase superfamily. RsmH family.

The protein localises to the cytoplasm. It catalyses the reaction cytidine(1402) in 16S rRNA + S-adenosyl-L-methionine = N(4)-methylcytidine(1402) in 16S rRNA + S-adenosyl-L-homocysteine + H(+). Functionally, specifically methylates the N4 position of cytidine in position 1402 (C1402) of 16S rRNA. The protein is Ribosomal RNA small subunit methyltransferase H of Borreliella afzelii (strain PKo) (Borrelia afzelii).